The sequence spans 83 residues: Kunitz-type serine protease inhibitor textilinin-3 (83 aa).

Positions 1–24 (MSSGGLLLLLGLLTLWEVLTPVSS) are cleaved as a signal peptide. Positions 31-81 (CKLPAETGRCNAKIPRFYYNPRQHQCIEFLYGGCGGNANNFKTIKECESTC) constitute a BPTI/Kunitz inhibitor domain. Disulfide bonds link cysteine 31–cysteine 81, cysteine 40–cysteine 64, and cysteine 56–cysteine 77.

This sequence belongs to the venom Kunitz-type family. In terms of tissue distribution, expressed by the venom gland.

The protein localises to the secreted. In terms of biological role, serine protease inhibitor. Does not inhibit plasmin, and does not reduce blood loss in the mouse tail vein blood loss model. The chain is Kunitz-type serine protease inhibitor textilinin-3 from Pseudonaja textilis textilis (Eastern brown snake).